The primary structure comprises 263 residues: MTDNAPRIHPTAVIDPAARLADDVQVGAFTLIGADVEIGAGTVVGPHCSIHGPTRIGRDNRFVGHAAIGGEPQDKKFAGERTELVIGDRNVFREFVTVNRGTGGGGGITTIGNDNWMLAYTHVAHDCHVGNFCVFSNNTTLAGHVTVGDYVIISGFAGAHQFCRIGAHAFLGMGALTNGDVPPFTMVGTDSLGRPRGINSEGLKRRGFDAERISAIKRAYRTLYVAGLPLAEAKQQLTEQARGSDDVKAMLDFIEHAERPLLR.

It belongs to the transferase hexapeptide repeat family. LpxA subfamily. As to quaternary structure, homotrimer.

Its subcellular location is the cytoplasm. The catalysed reaction is a (3R)-hydroxyacyl-[ACP] + UDP-N-acetyl-alpha-D-glucosamine = a UDP-3-O-[(3R)-3-hydroxyacyl]-N-acetyl-alpha-D-glucosamine + holo-[ACP]. The protein operates within glycolipid biosynthesis; lipid IV(A) biosynthesis; lipid IV(A) from (3R)-3-hydroxytetradecanoyl-[acyl-carrier-protein] and UDP-N-acetyl-alpha-D-glucosamine: step 1/6. Its function is as follows. Involved in the biosynthesis of lipid A, a phosphorylated glycolipid that anchors the lipopolysaccharide to the outer membrane of the cell. The chain is Acyl-[acyl-carrier-protein]--UDP-N-acetylglucosamine O-acyltransferase from Stenotrophomonas maltophilia (strain R551-3).